A 417-amino-acid polypeptide reads, in one-letter code: Senescence-associated protein AAF, chloroplastic (417 aa).

The transit peptide at 1–36 (MALNVSKVVPNSPILVKSVNASRSRRVLLAYVHHPL) directs the protein to the chloroplast.

It belongs to the ATA15/OSA15 family. As to expression, expressed in leaves. Expressed in 7-day-old seedlings, roots, rosette leaves, cauline leaves and flower buds.

Its subcellular location is the plastid. It is found in the chloroplast. In terms of biological role, involved in modulation of redox homeostasis to regulate leaf senescence mediated by age and stress factors during plant development. Its function is dependent of EIN2, a central factor of ethylene signaling. The sequence is that of Senescence-associated protein AAF, chloroplastic from Arabidopsis thaliana (Mouse-ear cress).